Consider the following 306-residue polypeptide: tRNA pseudouridine synthase B (306 aa).

Asp-48 functions as the Nucleophile in the catalytic mechanism.

This sequence belongs to the pseudouridine synthase TruB family. Type 1 subfamily.

It catalyses the reaction uridine(55) in tRNA = pseudouridine(55) in tRNA. Its function is as follows. Responsible for synthesis of pseudouridine from uracil-55 in the psi GC loop of transfer RNAs. This Haemophilus influenzae (strain PittEE) protein is tRNA pseudouridine synthase B.